Here is a 184-residue protein sequence, read N- to C-terminus: Acetyl-CoA decarbonylase/synthase complex subunit epsilon 1 (184 aa).

Belongs to the CdhB family. Heterotetramer of two alpha and two epsilon subunits. The ACDS complex is made up of alpha, epsilon, beta, gamma and delta subunits with a probable stoichiometry of (alpha(2)epsilon(2))(4)-beta(8)-(gamma(1)delta(1))(8).

Its function is as follows. Part of a complex that catalyzes the reversible cleavage of acetyl-CoA, allowing autotrophic growth from CO(2). The alpha-epsilon subcomponent functions as a carbon monoxide dehydrogenase. The precise role of the epsilon subunit is unclear; it may have a stabilizing role within the alpha(2)epsilon(2) component and/or be involved in electron transfer to FAD during a potential FAD-mediated CO oxidation. This Archaeoglobus fulgidus (strain ATCC 49558 / DSM 4304 / JCM 9628 / NBRC 100126 / VC-16) protein is Acetyl-CoA decarbonylase/synthase complex subunit epsilon 1 (cdhB1).